A 159-amino-acid chain; its full sequence is Protein-export protein SecB (159 aa).

This sequence belongs to the SecB family. Homotetramer, a dimer of dimers. One homotetramer interacts with 1 SecA dimer.

The protein localises to the cytoplasm. Functionally, one of the proteins required for the normal export of preproteins out of the cell cytoplasm. It is a molecular chaperone that binds to a subset of precursor proteins, maintaining them in a translocation-competent state. It also specifically binds to its receptor SecA. The protein is Protein-export protein SecB of Burkholderia vietnamiensis (strain G4 / LMG 22486) (Burkholderia cepacia (strain R1808)).